A 181-amino-acid polypeptide reads, in one-letter code: MLIYKDIFTDDELSSDSFPMKLVDDLIYEFKGRHVVRKEGDIILAGSNPSAEEGAEDEGSDEHVERGIDIVLNHKLVEMNCYEDASMFKAYIKKFMKNIIDHMEKNNRDKADVDAFKKKIQAWVVSLLAKDRFKNLAFFIGERAAEGAENGQVAIIEYRDVDGTEVPTLMLVKEAILEEKC.

A TCTP domain is found at 1–181 (MLIYKDIFTD…VKEAILEEKC (181 aa)).

The protein belongs to the TCTP family.

The protein resides in the cytoplasm. Its function is as follows. Involved in calcium binding and microtubule stabilization. This chain is Translationally-controlled tumor protein homolog (tct-1), found in Caenorhabditis briggsae.